Consider the following 1011-residue polypeptide: Beta-galactosidase A (1011 aa).

Residues 1-19 (MKLLSSWVVAALAAQAAGA) form the signal peptide. Substrate contacts are provided by residues Tyr-96, 140–142 (NAE), and Asn-199. Glu-200 serves as the catalytic Proton donor. 2 disulfides stabilise this stretch: Cys-205-Cys-206 and Cys-267-Cys-316. Glu-299 serves as the catalytic Nucleophile. Tyr-365 provides a ligand contact to substrate. N-linked (GlcNAc...) asparagine glycosylation is found at Asn-374, Asn-456, Asn-625, Asn-707, Asn-763, Asn-780, and Asn-917.

This sequence belongs to the glycosyl hydrolase 35 family. As to quaternary structure, monomer.

It localises to the secreted. The enzyme catalyses Hydrolysis of terminal non-reducing beta-D-galactose residues in beta-D-galactosides.. In terms of biological role, cleaves beta-linked terminal galactosyl residues from gangliosides, glycoproteins, and glycosaminoglycans. Has high in vitro transglycosylation activity with p-nitrophenyl-beta-D-galactopyranoside, methyl-beta-D-galactopyranoside or lactose as a donor and galactose as an acceptor. The chain is Beta-galactosidase A (lacA) from Penicillium sp.